Consider the following 248-residue polypeptide: Probable transcriptional regulatory protein Nham_3525 (248 aa).

The segment at 1-21 (MAGHSQFKNIMHRKGRQDAQK) is disordered.

Belongs to the TACO1 family.

It localises to the cytoplasm. This chain is Probable transcriptional regulatory protein Nham_3525, found in Nitrobacter hamburgensis (strain DSM 10229 / NCIMB 13809 / X14).